Consider the following 202-residue polypeptide: ATP-dependent Clp protease proteolytic subunit (202 aa).

S98 serves as the catalytic Nucleophile. The active site involves H123.

Belongs to the peptidase S14 family. As to quaternary structure, fourteen ClpP subunits assemble into 2 heptameric rings which stack back to back to give a disk-like structure with a central cavity, resembling the structure of eukaryotic proteasomes.

The protein resides in the cytoplasm. It carries out the reaction Hydrolysis of proteins to small peptides in the presence of ATP and magnesium. alpha-casein is the usual test substrate. In the absence of ATP, only oligopeptides shorter than five residues are hydrolyzed (such as succinyl-Leu-Tyr-|-NHMec, and Leu-Tyr-Leu-|-Tyr-Trp, in which cleavage of the -Tyr-|-Leu- and -Tyr-|-Trp bonds also occurs).. Its function is as follows. Cleaves peptides in various proteins in a process that requires ATP hydrolysis. Has a chymotrypsin-like activity. Plays a major role in the degradation of misfolded proteins. The chain is ATP-dependent Clp protease proteolytic subunit from Desulfovibrio desulfuricans (strain ATCC 27774 / DSM 6949 / MB).